A 425-amino-acid polypeptide reads, in one-letter code: Zinc finger protein 789 (425 aa).

The KRAB domain maps to 11 to 82; that stretch reads LSFEDVAMYF…DLPRTGNRKA (72 aa). 8 C2H2-type zinc fingers span residues 201-223, 229-251, 257-279, 285-307, 313-335, 341-363, 369-391, and 397-419; these read YECSECGKVIRRKAWFDQHQRIH, FECKVCGQAFRQRSALTVHKQCH, YRCHDCGKCFRQLAYLVEHKRIH, YKCSKCEKTFSQNSTLIRHQVIH, HKCLECGKAFGRHSTLLCHQQIH, HKCSECGQSFGRNVDLIQHQRIH, FQCGECGKTFSFKRNLFRHQVIH, and YQCVICGKSFKWHTSFIKHQGTH.

It belongs to the krueppel C2H2-type zinc-finger protein family.

It localises to the nucleus. Functionally, may be involved in transcriptional regulation. The protein is Zinc finger protein 789 (ZNF789) of Homo sapiens (Human).